The primary structure comprises 185 residues: Inner membrane-spanning protein YciB (185 aa).

The next 5 membrane-spanning stretches (helical) occupy residues 19–39, 49–69, 72–92, 122–142, and 150–170; these read IHGI…LMAW, TMTW…LYFH, TFIK…LLFT, GYWI…AYAF, and FKLF…AVVI.

It belongs to the YciB family.

Its subcellular location is the cell inner membrane. Functionally, plays a role in cell envelope biogenesis, maintenance of cell envelope integrity and membrane homeostasis. The sequence is that of Inner membrane-spanning protein YciB from Acidithiobacillus ferrooxidans (strain ATCC 23270 / DSM 14882 / CIP 104768 / NCIMB 8455) (Ferrobacillus ferrooxidans (strain ATCC 23270)).